Here is a 77-residue protein sequence, read N- to C-terminus: Lantipeptide prochlorosin 4.3 (77 aa).

A propeptide spanning residues 1–64 is cleaved from the precursor; the sequence is MSEEQLKAFI…DDELEGVAGG (64 aa). Thr65 bears the 2,3-didehydrobutyrine mark. Residues 67-70 constitute a cross-link (lanthionine (Ser-Cys)); sequence SGGC. The segment at residues 72 to 76 is a cross-link (beta-methyllanthionine (Thr-Cys)); the sequence is TSMFC.

In terms of processing, cross-links are proved in vitro, when coepressed in E.coli with the ProcM lanthionine synthetase. Post-translationally, the lanthionine residue has both a DL configuration (with 2S,6R stereochemistry) and a LL configuration (with 2R,6R stereochemistry). DL and LL diastomers have a 4:1 ratio. It is unknown whether nonenzymatic cyclization occur, but authors favor a model in which ProcM does generate all thioether cross-links. The beta-methyllanthionine residue has a DL configuration (with 2S,3S,6R stereochemistry). Maturation of prochlorosin involves the enzymatic conversion of Thr, and Ser into dehydrated AA and the formation of thioether bonds with cysteines. This is followed by membrane translocation and cleavage of the modified precursor.

Its subcellular location is the secreted. In terms of biological role, lanthionine-containing peptide (lantipeptide) with unknown function. Does not show antibiotic activity against Lactococcus lactis 117 and Bacillus subtilis 6633 bacteria. Organisms that produce this peptide live in oligotrophic environments at very dilute concentrations, suggesting this peptide is not secreted to influence other bacteria. In Prochlorococcus marinus (strain MIT 9313), this protein is Lantipeptide prochlorosin 4.3.